Reading from the N-terminus, the 258-residue chain is NAD kinase (258 aa).

Asp44 (proton acceptor) is an active-site residue. Residues 44 to 45, 116 to 117, Asp146, Ala154, and 157 to 162 each bind NAD(+); these read DG, NE, and TAYNLS.

It belongs to the NAD kinase family. A divalent metal cation is required as a cofactor.

It localises to the cytoplasm. The catalysed reaction is NAD(+) + ATP = ADP + NADP(+) + H(+). Functionally, involved in the regulation of the intracellular balance of NAD and NADP, and is a key enzyme in the biosynthesis of NADP. Catalyzes specifically the phosphorylation on 2'-hydroxyl of the adenosine moiety of NAD to yield NADP. The sequence is that of NAD kinase from Zymomonas mobilis subsp. mobilis (strain ATCC 31821 / ZM4 / CP4).